Consider the following 479-residue polypeptide: PRAME family member 19 (479 aa).

An LRR 1 repeat occupies 15-38 (QSLLRDQALAISVLDELPRELFPR). The LRR 1; degenerate repeat unit spans residues 97 to 124 (RWKLQVLEMRDVDENFWTIWSGARPLSC). Residues 179–203 (HLCCTKVVNYSMNILNFRNILETVY) form an LRR 2; degenerate repeat. An LRR 3; degenerate repeat occupies 204-230 (PDSIQVLEIWNMCWPCMVAEVSRYLSQ). An LRR 4; degenerate repeat occupies 231–265 (MKNLRKLFISDGCGYLPSFESQGQLVAEFSSVFLR). LRR repeat units follow at residues 266–291 (LEYL…IRCL), 292–323 (KSPL…SQLK), 324–342 (QLNL…PLRA), 348–375 (AATL…ALSR), and 376–400 (CSNL…LLRH).

It belongs to the PRAME family.

This Homo sapiens (Human) protein is PRAME family member 19.